A 622-amino-acid chain; its full sequence is Sodium/potassium/calcium exchanger 4 (622 aa).

Positions 1-38 (MALRGTLRPLKVRRRREMLPQQVGFVCAVLALVCCASG) are cleaved as a signal peptide. Residues 39–97 (LFGSLGHKTASASKRVLPDTWRNRKLMAPVNGTQTAKNCTDPAIHEFPTDLFSNKERQH) lie on the Extracellular side of the membrane. N-linked (GlcNAc...) asparagine glycosylation is found at Asn-69 and Asn-76. A helical transmembrane segment spans residues 98–118 (GAVLLHILGALYMFYALAIVC). The Cytoplasmic segment spans residues 119 to 142 (DDFFVPSLEKICERLHLSEDVAGA). The stretch at 139–179 (VAGATFMAAGSSTPELFASVIGVFITHGDVGVGTIVGSAVF) is one Alpha-1 repeat. Residues 143 to 163 (TFMAAGSSTPELFASVIGVFI) traverse the membrane as a helical segment. Topologically, residues 164 to 172 (THGDVGVGT) are extracellular. Residues 173-193 (IVGSAVFNILCIIGVCGLFAG) traverse the membrane as a helical segment. At 194–200 (QVVRLTW) the chain is on the cytoplasmic side. The helical transmembrane segment at 201 to 221 (WAVCRDSVYYTISVIVLIVFI) threads the bilayer. Over 222–224 (YDE) the chain is Extracellular. The chain crosses the membrane as a helical span at residues 225–245 (QIVWWEGLVLIILYVFYILIM). The Cytoplasmic segment spans residues 246 to 457 (KYNVKMQAFF…RWEKFFMVTF (212 aa)). Residues 358–410 (ANGVSSKPLQNGRHENIENGNVPVENPEDPQQNQEQQPPPQPPPPEPEPVEAD) form a disordered region. Low complexity predominate over residues 380-393 (PVENPEDPQQNQEQ). Pro residues predominate over residues 394-404 (QPPPQPPPPEP). Residues 458–478 (ITATLWIAVFSYIMVWLVTII) form a helical membrane-spanning segment. Position 479 (Gly-479) is a topological domain, extracellular. Residues 480-500 (YTLGIPDVIMGITFLAAGTSV) traverse the membrane as a helical segment. The stretch at 495 to 526 (AAGTSVPDCMASLIVARQGLGDMAVSNTIGSN) is one Alpha-2 repeat. Residues 501-526 (PDCMASLIVARQGLGDMAVSNTIGSN) lie on the Cytoplasmic side of the membrane. Residues 527 to 547 (VFDILVGLGVPWGLQTMVVNY) form a helical membrane-spanning segment. Topologically, residues 548–557 (GSTVKINSRG) are extracellular. Residues 558–578 (LVYSVVLLLGSVALTVLGIHL) form a helical membrane-spanning segment. Topologically, residues 579-586 (NKWRLDRK) are cytoplasmic. The chain crosses the membrane as a helical span at residues 587 to 607 (LGVYVLVLYAIFLCFSIMIEF). Residues 608-622 (NVFTFVNLPMCREDD) are Extracellular-facing.

The protein belongs to the Ca(2+):cation antiporter (CaCA) (TC 2.A.19) family. SLC24A subfamily. In terms of tissue distribution, expressed abundantly in all regions of the brain, aorta, lung and thymus. Expressed at lower levels in the stomach and intestine.

The protein resides in the cell membrane. Its subcellular location is the cytoplasm. The enzyme catalyses Ca(2+)(out) + K(+)(out) + 4 Na(+)(in) = Ca(2+)(in) + K(+)(in) + 4 Na(+)(out). Functionally, calcium, potassium:sodium antiporter that transports 1 Ca(2+) and 1 K(+) in exchange for 4 Na(+). Controls the rapid response termination and proper regulation of adaptation in olfactory sensory neurons (OSNs) which subsequently influences how odor information is encoded and perceived. May play a role in calcium transport during amelogenesis. The protein is Sodium/potassium/calcium exchanger 4 of Homo sapiens (Human).